A 162-amino-acid chain; its full sequence is Phosphopantetheine adenylyltransferase (162 aa).

Thr10 is a substrate binding site. Residues 10 to 11 (TF) and His18 each bind ATP. Substrate is bound by residues Lys42, Leu74, and Arg88. ATP-binding positions include 89–91 (GLR), Glu99, and 124–130 (FSCISST).

The protein belongs to the bacterial CoaD family. In terms of assembly, homohexamer. It depends on Mg(2+) as a cofactor.

It is found in the cytoplasm. The catalysed reaction is (R)-4'-phosphopantetheine + ATP + H(+) = 3'-dephospho-CoA + diphosphate. It functions in the pathway cofactor biosynthesis; coenzyme A biosynthesis; CoA from (R)-pantothenate: step 4/5. Its function is as follows. Reversibly transfers an adenylyl group from ATP to 4'-phosphopantetheine, yielding dephospho-CoA (dPCoA) and pyrophosphate. The sequence is that of Phosphopantetheine adenylyltransferase from Francisella philomiragia subsp. philomiragia (strain ATCC 25017 / CCUG 19701 / FSC 153 / O#319-036).